Here is a 272-residue protein sequence, read N- to C-terminus: B3 domain-containing protein Os10g0323000 (272 aa).

Residues 39–132 (RYGENRKHGQ…TLDLLILDKH (94 aa)) constitute a DNA-binding region (TF-B3 1). Residues 139–171 (PPSKRDLKLKSKRSTHQDSKGHPSNTDPGPSRI) are disordered. The segment covering 141–159 (SKRDLKLKSKRSTHQDSKG) has biased composition (basic and acidic residues). Positions 180–272 (ESSANTQLLV…THLGVIVDIF (93 aa)) form a DNA-binding region, TF-B3 2.

The protein localises to the nucleus. The polypeptide is B3 domain-containing protein Os10g0323000 (Oryza sativa subsp. japonica (Rice)).